Consider the following 560-residue polypeptide: Choline/ethanolamine transporter FLVCR1 (560 aa).

A disordered region spans residues 1–43 (MARPDDEVGPAVAPGHPLGKGYLPVPKGAPDGEARLVPQNGPE). The Cytoplasmic segment spans residues 1-92 (MARPDDEVGP…EDVPCPACPP (92 aa)). The helical transmembrane segment at 93 to 117 (RTALSPRRFVVLLIFSLYSLVNAFQ) threads the bilayer. The Extracellular segment spans residues 118-135 (WIQYSSISNVFEDFYEVS). Residues 136–163 (PLHINWLSMVYMVAYVPLIFPATWLLDT) traverse the membrane as a helical segment. Residues 164–165 (RG) are Cytoplasmic-facing. A helical transmembrane segment spans residues 166 to 185 (LRLTALLGSGLNCLGAWVKC). Topologically, residues 186 to 192 (GSVQRHL) are extracellular. The chain crosses the membrane as a helical span at residues 193–221 (FWVTMLGQILCSVAQVFILGLPSPVASVW). Gln207 is a binding site for ethanolamine. At 222–226 (FGPKE) the chain is on the cytoplasmic side. A helical membrane pass occupies residues 227–252 (VSTACATAVLGNQLGTAVGFLLPPVL). The Extracellular segment spans residues 253 to 270 (VPALGTQNNTGLLAHTQN). Asn270 is a glycosylation site (N-linked (GlcNAc...) asparagine). The chain crosses the membrane as a helical span at residues 271–300 (NTDLLAHNINTMFYGTAFISTFLFFLTVIA). The Cytoplasmic segment spans residues 301–336 (FKEKPPLPPSQAQAILRDSPPEEYSYKSSIWNLCRN). A helical membrane pass occupies residues 337 to 367 (IPFVLLLVSYGIMTGAFYSISTLLNQIILTY). At 368–371 (YVGE) the chain is on the extracellular side. The chain crosses the membrane as a helical span at residues 372-400 (EVNAGRIGLTLVVAGMVGSILCGLWLDYT). Topologically, residues 401–402 (KT) are cytoplasmic. A helical transmembrane segment spans residues 403–425 (YKQTTLIVYVLSFIGMLIFTFTL). The Extracellular portion of the chain corresponds to 426–428 (NLG). The chain crosses the membrane as a helical span at residues 429 to 458 (YIVALFFTGGILGFFMTGYLPLGFEFAVEI). The Cytoplasmic segment spans residues 459 to 466 (TYPESEGM). Residues 467-492 (SSGLLNTAAQILGIFFTLAQGKITTD) form a helical membrane-spanning segment. Gln476 provides a ligand contact to ethanolamine. Gln476 contacts choline. Residues 493–495 (YNS) are Extracellular-facing. Residues 496–518 (PEAGNIFLCAWMFVGIILTALIK) form a helical membrane-spanning segment. The Cytoplasmic portion of the chain corresponds to 519 to 560 (SDLRRHNINTGLTNIDVKAVPVDSRVDPKPKAMVSIQSESSL). Position 542 is a phosphoserine (Ser542).

This sequence belongs to the major facilitator superfamily. Feline leukemia virus subgroup C receptor (TC 2.A.1.28.1) family.

The protein localises to the cell membrane. It catalyses the reaction choline(out) = choline(in). It carries out the reaction ethanolamine(in) = ethanolamine(out). The catalysed reaction is heme b(in) = heme b(out). Functionally, uniporter that mediates the transport of extracellular choline and ethanolamine into cells, thereby playing a key role in phospholipid biosynthesis. Choline and ethanolamine are the precursors of phosphatidylcholine and phosphatidylethanolamine, respectively, the two most abundant phospholipids. Transport is not coupled with proton transport and is exclusively driven by the choline (or ethanolamine) gradient across the plasma membrane. Also acts as a heme b transporter that mediates heme efflux from the cytoplasm to the extracellular compartment. This is Choline/ethanolamine transporter FLVCR1 (Flvcr1) from Mus terricolor (Earth-colored mouse).